Reading from the N-terminus, the 473-residue chain is Ribulose bisphosphate carboxylase large chain (473 aa).

Residues Asn116 and Thr166 each contribute to the substrate site. The Proton acceptor role is filled by Lys168. Lys170 contacts substrate. Lys194, Asp196, and Glu197 together coordinate Mg(2+). Lys194 carries the post-translational modification N6-carboxylysine. His287 serves as the catalytic Proton acceptor. Residues Arg288, His320, and Ser372 each coordinate substrate.

This sequence belongs to the RuBisCO large chain family. Type I subfamily. As to quaternary structure, heterohexadecamer of 8 large chains and 8 small chains. Mg(2+) serves as cofactor.

It carries out the reaction 2 (2R)-3-phosphoglycerate + 2 H(+) = D-ribulose 1,5-bisphosphate + CO2 + H2O. The enzyme catalyses D-ribulose 1,5-bisphosphate + O2 = 2-phosphoglycolate + (2R)-3-phosphoglycerate + 2 H(+). Its function is as follows. RuBisCO catalyzes two reactions: the carboxylation of D-ribulose 1,5-bisphosphate, the primary event in carbon dioxide fixation, as well as the oxidative fragmentation of the pentose substrate. Both reactions occur simultaneously and in competition at the same active site. The protein is Ribulose bisphosphate carboxylase large chain of Cupriavidus metallidurans (strain ATCC 43123 / DSM 2839 / NBRC 102507 / CH34) (Ralstonia metallidurans).